The following is a 493-amino-acid chain: Guanosine-5'-triphosphate,3'-diphosphate pyrophosphatase (493 aa).

It belongs to the GppA/Ppx family. GppA subfamily.

The enzyme catalyses guanosine 3'-diphosphate 5'-triphosphate + H2O = guanosine 3',5'-bis(diphosphate) + phosphate + H(+). The protein operates within purine metabolism; ppGpp biosynthesis; ppGpp from GTP: step 2/2. Its function is as follows. Catalyzes the conversion of pppGpp to ppGpp. Guanosine pentaphosphate (pppGpp) is a cytoplasmic signaling molecule which together with ppGpp controls the 'stringent response', an adaptive process that allows bacteria to respond to amino acid starvation, resulting in the coordinated regulation of numerous cellular activities. The sequence is that of Guanosine-5'-triphosphate,3'-diphosphate pyrophosphatase from Salmonella agona (strain SL483).